The following is a 731-amino-acid chain: 1,4-alpha-glucan branching enzyme GlgB (731 aa).

Asp-411 functions as the Nucleophile in the catalytic mechanism. Glu-464 serves as the catalytic Proton donor.

The protein belongs to the glycosyl hydrolase 13 family. GlgB subfamily. As to quaternary structure, monomer.

It carries out the reaction Transfers a segment of a (1-&gt;4)-alpha-D-glucan chain to a primary hydroxy group in a similar glucan chain.. It participates in glycan biosynthesis; glycogen biosynthesis. Functionally, catalyzes the formation of the alpha-1,6-glucosidic linkages in glycogen by scission of a 1,4-alpha-linked oligosaccharide from growing alpha-1,4-glucan chains and the subsequent attachment of the oligosaccharide to the alpha-1,6 position. The polypeptide is 1,4-alpha-glucan branching enzyme GlgB (Mycobacterium bovis (strain ATCC BAA-935 / AF2122/97)).